Reading from the N-terminus, the 334-residue chain is Protein-methionine-sulfoxide reductase catalytic subunit MsrP (334 aa).

Residues 1-44 constitute a signal peptide (tat-type signal); that stretch reads MKKNQFLKESDVTAESVFFMKRRQVLKALGISAAALSLPHAAHA. Mo-molybdopterin-binding positions include asparagine 88, 91 to 92, cysteine 146, threonine 181, asparagine 233, arginine 238, and 249 to 251; these read YE and GIK.

It belongs to the MsrP family. As to quaternary structure, heterodimer of a catalytic subunit (MsrP) and a heme-binding subunit (MsrQ). The cofactor is Mo-molybdopterin. Post-translationally, predicted to be exported by the Tat system. The position of the signal peptide cleavage has not been experimentally proven.

It is found in the periplasm. The enzyme catalyses L-methionyl-[protein] + a quinone + H2O = L-methionyl-(S)-S-oxide-[protein] + a quinol. The catalysed reaction is L-methionyl-[protein] + a quinone + H2O = L-methionyl-(R)-S-oxide-[protein] + a quinol. In terms of biological role, part of the MsrPQ system that repairs oxidized periplasmic proteins containing methionine sulfoxide residues (Met-O), using respiratory chain electrons. Thus protects these proteins from oxidative-stress damage caused by reactive species of oxygen and chlorine generated by the host defense mechanisms. MsrPQ is essential for the maintenance of envelope integrity under bleach stress, rescuing a wide series of structurally unrelated periplasmic proteins from methionine oxidation, including the primary periplasmic chaperone SurA and the lipoprotein Pal. The catalytic subunit MsrP is non-stereospecific, being able to reduce both (R-) and (S-) diastereoisomers of methionine sulfoxide. This Escherichia coli O81 (strain ED1a) protein is Protein-methionine-sulfoxide reductase catalytic subunit MsrP.